Consider the following 486-residue polypeptide: Glutamate--tRNA ligase 2 (486 aa).

The 'HIGH' region motif lies at 12–22; sequence PSPTGELHIGN. The 'KMSKS' region motif lies at 252–256; the sequence is KLSKR. Lys-255 contributes to the ATP binding site.

The protein belongs to the class-I aminoacyl-tRNA synthetase family. Glutamate--tRNA ligase type 1 subfamily. Monomer.

Its subcellular location is the cytoplasm. The enzyme catalyses tRNA(Glu) + L-glutamate + ATP = L-glutamyl-tRNA(Glu) + AMP + diphosphate. Functionally, catalyzes the attachment of glutamate to tRNA(Glu) in a two-step reaction: glutamate is first activated by ATP to form Glu-AMP and then transferred to the acceptor end of tRNA(Glu). This is Glutamate--tRNA ligase 2 from Syntrophus aciditrophicus (strain SB).